Consider the following 37-residue polypeptide: uncharacterized protein (37 aa).

This is an uncharacterized protein from Bacillus caldotenax.